The sequence spans 95 residues: uncharacterized protein (95 aa).

Belongs to the inositol monophosphatase superfamily.

This is an uncharacterized protein from Rhizobium leguminosarum bv. phaseoli.